The chain runs to 136 residues: Histone H3, embryonic (136 aa).

A disordered region spans residues 1-43; it reads MARTKQTARKSTGGKAPRKQLATKAARKSAPATGGVKKPHRYR. An N6-methylated lysine modification is found at Lys5. Lys10 is modified (N6-acetyllysine; alternate). The residue at position 10 (Lys10) is an N6-methylated lysine; alternate. The residue at position 11 (Ser11) is a Phosphoserine. An N6-acetyllysine mark is found at Lys15 and Lys24. An N6-methylated lysine mark is found at Lys28, Lys37, and Lys80.

Belongs to the histone H3 family. In terms of assembly, the nucleosome is a histone octamer containing two molecules each of H2A, H2B, H3 and H4 assembled in one H3-H4 heterotetramer and two H2A-H2B heterodimers. The octamer wraps approximately 147 bp of DNA. Acetylation is generally linked to gene activation. In terms of processing, methylation at Lys-5 is linked to gene activation. Methylation at Lys-10 is linked to gene repression.

The protein resides in the nucleus. Its subcellular location is the chromosome. Core component of nucleosome. Nucleosomes wrap and compact DNA into chromatin, limiting DNA accessibility to the cellular machineries which require DNA as a template. Histones thereby play a central role in transcription regulation, DNA repair, DNA replication and chromosomal stability. DNA accessibility is regulated via a complex set of post-translational modifications of histones, also called histone code, and nucleosome remodeling. In Strongylocentrotus purpuratus (Purple sea urchin), this protein is Histone H3, embryonic.